The following is a 92-amino-acid chain: RNA-binding protein Hfq (92 aa).

The region spanning 9–68 is the Sm domain; the sequence is DPFLNALRRERVPVSVYLVNGIKLQGTIESFDQFVVLLRNTVSQMVYKHAISTVVPARNV. Residues 72 to 92 are disordered; it reads PGGGYVQSNENNQAEDDDVEQ.

It belongs to the Hfq family. As to quaternary structure, homohexamer.

In terms of biological role, RNA chaperone that binds small regulatory RNA (sRNAs) and mRNAs to facilitate mRNA translational regulation in response to envelope stress, environmental stress and changes in metabolite concentrations. Also binds with high specificity to tRNAs. This chain is RNA-binding protein Hfq, found in Xanthomonas campestris pv. campestris (strain 8004).